A 255-amino-acid polypeptide reads, in one-letter code: Ribosomal RNA small subunit methyltransferase A (255 aa).

6 residues coordinate S-adenosyl-L-methionine: Asn-12, Leu-14, Gly-39, Glu-60, Asp-84, and Asn-106.

It belongs to the class I-like SAM-binding methyltransferase superfamily. rRNA adenine N(6)-methyltransferase family. RsmA subfamily.

The protein resides in the cytoplasm. It carries out the reaction adenosine(1518)/adenosine(1519) in 16S rRNA + 4 S-adenosyl-L-methionine = N(6)-dimethyladenosine(1518)/N(6)-dimethyladenosine(1519) in 16S rRNA + 4 S-adenosyl-L-homocysteine + 4 H(+). Functionally, specifically dimethylates two adjacent adenosines (A1518 and A1519) in the loop of a conserved hairpin near the 3'-end of 16S rRNA in the 30S particle. May play a critical role in biogenesis of 30S subunits. In Herminiimonas arsenicoxydans, this protein is Ribosomal RNA small subunit methyltransferase A.